Consider the following 284-residue polypeptide: Cell division protein FtsQ (284 aa).

Residues 1–10 (MAFGKSKNRR) are compositionally biased toward basic residues. A disordered region spans residues 1–23 (MAFGKSKNRRRQDAAQQKEAVRG). At 1-34 (MAFGKSKNRRRQDAAQQKEAVRGAVRSQGPRALK) the chain is on the cytoplasmic side. Residues 35-52 (VLGLTLGTGLLVWGGAAL) form a helical membrane-spanning segment. Topologically, residues 53-284 (REWTLTSPRF…ASERSGASMR (232 aa)) are periplasmic. The region spanning 62–130 (FELEAVSFSG…NRVSVEVTEH (69 aa)) is the POTRA domain.

The protein belongs to the FtsQ/DivIB family. FtsQ subfamily.

The protein resides in the cell inner membrane. Essential cell division protein. This is Cell division protein FtsQ from Myxococcus fulvus (strain ATCC BAA-855 / HW-1).